We begin with the raw amino-acid sequence, 520 residues long: MSRQLTLYPGAERLGFSGCSAVISGRFSGSHASVRAGVKGAAFGSRSLFCVGGGRRLALSSGGRSGGFTLGHGGASGGRPGGFVGTVFGSAGLGPTCPSVCPPGGIPQVVVNKSLLAPLNVELDPEIQKVRAQEREQIKALNNKFASFIDKVRFLEQQNQVLETKWELLQQLDQNNSRRSLEPVHESYISNLQKQLEILSGDRVRLDSELRNMREVVEDCKKRYEVEINRRTAAENEFVVLKKDVDAAYMNKVELQAKVDSMTDDIKFFKVLFEGEIAQMQSHISDTSVILSMDNNRQLDLDSILAEVRAQYEEIAVKSKAETENMYQCKIQELQATAGQHGDDLKLTKSEITEINRLIQRIHSEIGNMKKQCSNLETAIADAEQRGDCALKDARAKLDQLEGVLQQSKEELARMLREHQELMNVKLALDMEIATYRKLLESEESRMAGEYPSSVSISVVSSTNAGPGGAGFSVGFGASSNYNYRPLALEVKTKGSCGSELKDPPAKTSASSCVSKKASR.

Residues 1–133 form a head region; it reads MSRQLTLYPG…DPEIQKVRAQ (133 aa). Positions 134–169 are coil 1A; the sequence is EREQIKALNNKFASFIDKVRFLEQQNQVLETKWELL. Residues 134 to 447 form the IF rod domain; the sequence is EREQIKALNN…KLLESEESRM (314 aa). A linker 1 region spans residues 170–188; that stretch reads QQLDQNNSRRSLEPVHESY. The coil 1B stretch occupies residues 189 to 280; it reads ISNLQKQLEI…VLFEGEIAQM (92 aa). The linker 12 stretch occupies residues 281-304; that stretch reads QSHISDTSVILSMDNNRQLDLDSI. The coil 2 stretch occupies residues 305–443; the sequence is LAEVRAQYEE…ATYRKLLESE (139 aa). The interval 444-520 is tail; it reads ESRMAGEYPS…SSCVSKKASR (77 aa). The segment at 495-520 is disordered; it reads GSCGSELKDPPAKTSASSCVSKKASR.

The protein belongs to the intermediate filament family. Heterotetramer of two type I and two type II keratins.

Its function is as follows. Has a role in hair formation. Specific component of keratin intermediate filaments in the inner root sheath (IRS) of the hair follicle. The sequence is that of Keratin, type II cytoskeletal 72 (Krt72) from Rattus norvegicus (Rat).